A 226-amino-acid chain; its full sequence is Thymidylate kinase (226 aa).

Residue 12 to 19 (GIDGAGKS) participates in ATP binding.

It belongs to the thymidylate kinase family.

The enzyme catalyses dTMP + ATP = dTDP + ADP. Phosphorylation of dTMP to form dTDP in both de novo and salvage pathways of dTTP synthesis. The protein is Thymidylate kinase of Verminephrobacter eiseniae (strain EF01-2).